Reading from the N-terminus, the 483-residue chain is Ankyrin repeat domain-containing protein M-T5 (483 aa).

6 ANK repeats span residues 32 to 63, 67 to 101, 105 to 137, 177 to 210, 250 to 279, and 283 to 312; these read SRDT…DVNG, SRTS…DVNA, DGRY…SVYV, YGFN…DSSR, LDFT…DPNV, and LGNS…TPDA. Positions 390–478 are PRANC/F-box-like; sequence VSVFDTAFGL…LTDDEIHDLF (89 aa).

As to quaternary structure, interacts (via PRANC/F-box-like domain) with the SKP1 component of the host SCF ubiquitin ligase complex. Interacts (via N-terminus) with host AKT1.

Functionally, substrate-specific adapter of SKP1-containing E3 ubiquitin-protein ligases which mediate the ubiquitination and subsequent proteasomal degradation of host target proteins including CDKN1B. Disappearance of host CDKN1B correlates with cell cycle progression through the G0/G1 checkpoint. Therefore, viruses in infected cells are protected from diverse innate host antiviral responses normally triggered by G0/G1 cell cycle arrest. This is Ankyrin repeat domain-containing protein M-T5 (m005R) from Myxoma virus (strain Lausanne) (MYXV).